Consider the following 333-residue polypeptide: Phosphoribosylformylglycinamidine cyclo-ligase (333 aa).

This sequence belongs to the AIR synthase family.

Its subcellular location is the cytoplasm. The catalysed reaction is 2-formamido-N(1)-(5-O-phospho-beta-D-ribosyl)acetamidine + ATP = 5-amino-1-(5-phospho-beta-D-ribosyl)imidazole + ADP + phosphate + H(+). The protein operates within purine metabolism; IMP biosynthesis via de novo pathway; 5-amino-1-(5-phospho-D-ribosyl)imidazole from N(2)-formyl-N(1)-(5-phospho-D-ribosyl)glycinamide: step 2/2. The sequence is that of Phosphoribosylformylglycinamidine cyclo-ligase from Clostridium perfringens (strain 13 / Type A).